The following is a 763-amino-acid chain: Phosphoglycerol transferase I (763 aa).

4 helical membrane passes run 1 to 21 (MSEL…AWKA), 24 to 44 (NTWW…LNIT), 77 to 97 (ILPG…LGWI), and 108 to 128 (VGYS…SPAF).

Belongs to the OpgB family.

The protein localises to the cell inner membrane. The catalysed reaction is a phosphatidylglycerol + a membrane-derived-oligosaccharide D-glucose = a 1,2-diacyl-sn-glycerol + a membrane-derived-oligosaccharide 6-(glycerophospho)-D-glucose.. The protein operates within glycan metabolism; osmoregulated periplasmic glucan (OPG) biosynthesis. Transfers a phosphoglycerol residue from phosphatidylglycerol to the membrane-bound nascent glucan backbones. This chain is Phosphoglycerol transferase I, found in Salmonella arizonae (strain ATCC BAA-731 / CDC346-86 / RSK2980).